The sequence spans 334 residues: NADH-ubiquinone oxidoreductase chain 1 (334 aa).

9 consecutive transmembrane segments (helical) span residues 4–24 (FVFLMIIETIHIILKILIIVI), 82–102 (FIYVAAPVLSFTLALIAWGVI), 115–135 (IGILFTLAVSSISVYAILMSG), 161–181 (IGLIIITVILCVGSLNITEIV), 187–207 (GIWFFFPLFPVAMMFFASALA), 222–242 (ELVSGYNVEYASMSFALFFLA), 247–267 (IILMSCLTTILFLGGWLSPIV), 268–288 (FFKGGPAWFGLKTSFIILLFI), and 311–331 (LPLSLAFVVLVASLLFGLNGL).

The protein belongs to the complex I subunit 1 family.

Its subcellular location is the mitochondrion inner membrane. It carries out the reaction a ubiquinone + NADH + 5 H(+)(in) = a ubiquinol + NAD(+) + 4 H(+)(out). Core subunit of the mitochondrial membrane respiratory chain NADH dehydrogenase (Complex I) that is believed to belong to the minimal assembly required for catalysis. Complex I functions in the transfer of electrons from NADH to the respiratory chain. The immediate electron acceptor for the enzyme is believed to be ubiquinone. The polypeptide is NADH-ubiquinone oxidoreductase chain 1 (ND1) (Metridium senile (Brown sea anemone)).